Here is a 186-residue protein sequence, read N- to C-terminus: Probable chorismate pyruvate-lyase (186 aa).

The substrate site is built by Arg80, Leu118, and Glu170.

It belongs to the UbiC family.

It localises to the cytoplasm. The catalysed reaction is chorismate = 4-hydroxybenzoate + pyruvate. Its pathway is cofactor biosynthesis; ubiquinone biosynthesis. Its function is as follows. Removes the pyruvyl group from chorismate, with concomitant aromatization of the ring, to provide 4-hydroxybenzoate (4HB) for the ubiquinone pathway. The polypeptide is Probable chorismate pyruvate-lyase (Pseudomonas syringae pv. tomato (strain ATCC BAA-871 / DC3000)).